A 129-amino-acid polypeptide reads, in one-letter code: Sulfurtransferase TusD (129 aa).

Cysteine 79 functions as the Cysteine persulfide intermediate in the catalytic mechanism.

This sequence belongs to the DsrE/TusD family. Heterohexamer, formed by a dimer of trimers. The hexameric TusBCD complex contains 2 copies each of TusB, TusC and TusD. The TusBCD complex interacts with TusE.

The protein resides in the cytoplasm. Functionally, part of a sulfur-relay system required for 2-thiolation of 5-methylaminomethyl-2-thiouridine (mnm(5)s(2)U) at tRNA wobble positions. Accepts sulfur from TusA and transfers it in turn to TusE. This Pectobacterium atrosepticum (strain SCRI 1043 / ATCC BAA-672) (Erwinia carotovora subsp. atroseptica) protein is Sulfurtransferase TusD.